Reading from the N-terminus, the 274-residue chain is Thiazole synthase (274 aa).

The active-site Schiff-base intermediate with DXP is Lys115. 1-deoxy-D-xylulose 5-phosphate contacts are provided by residues Gly176, 202 to 203 (AG), and 224 to 225 (NS).

It belongs to the ThiG family. Homotetramer. Forms heterodimers with either ThiH or ThiS.

Its subcellular location is the cytoplasm. The enzyme catalyses [ThiS sulfur-carrier protein]-C-terminal-Gly-aminoethanethioate + 2-iminoacetate + 1-deoxy-D-xylulose 5-phosphate = [ThiS sulfur-carrier protein]-C-terminal Gly-Gly + 2-[(2R,5Z)-2-carboxy-4-methylthiazol-5(2H)-ylidene]ethyl phosphate + 2 H2O + H(+). The protein operates within cofactor biosynthesis; thiamine diphosphate biosynthesis. Its function is as follows. Catalyzes the rearrangement of 1-deoxy-D-xylulose 5-phosphate (DXP) to produce the thiazole phosphate moiety of thiamine. Sulfur is provided by the thiocarboxylate moiety of the carrier protein ThiS. In vitro, sulfur can be provided by H(2)S. The protein is Thiazole synthase of Psychrobacter arcticus (strain DSM 17307 / VKM B-2377 / 273-4).